Consider the following 223-residue polypeptide: Deoxyribose-phosphate aldolase (223 aa).

Asp89 acts as the Proton donor/acceptor in catalysis. The active-site Schiff-base intermediate with acetaldehyde is the Lys152. Lys181 acts as the Proton donor/acceptor in catalysis.

Belongs to the DeoC/FbaB aldolase family. DeoC type 1 subfamily.

It is found in the cytoplasm. It catalyses the reaction 2-deoxy-D-ribose 5-phosphate = D-glyceraldehyde 3-phosphate + acetaldehyde. It participates in carbohydrate degradation; 2-deoxy-D-ribose 1-phosphate degradation; D-glyceraldehyde 3-phosphate and acetaldehyde from 2-deoxy-alpha-D-ribose 1-phosphate: step 2/2. Catalyzes a reversible aldol reaction between acetaldehyde and D-glyceraldehyde 3-phosphate to generate 2-deoxy-D-ribose 5-phosphate. The sequence is that of Deoxyribose-phosphate aldolase from Bacillus cereus (strain B4264).